Reading from the N-terminus, the 104-residue chain is COX assembly mitochondrial protein 1 (104 aa).

The region spanning 10-52 (QKQCADLIRALEECHKSFGKFFGECNTIKYELKACLTKDRNDK) is the CHCH domain. Short sequence motifs (cx9C motif) lie at residues 13–23 (CADLIRALEEC) and 34–44 (CNTIKYELKAC). 2 cysteine pairs are disulfide-bonded: cysteine 13–cysteine 44 and cysteine 23–cysteine 34.

It belongs to the CMC family.

It is found in the mitochondrion inner membrane. In terms of biological role, required for mitochondrial cytochrome c oxidase (COX) assembly and respiration. The chain is COX assembly mitochondrial protein 1 (cmc1) from Schizosaccharomyces pombe (strain 972 / ATCC 24843) (Fission yeast).